A 108-amino-acid chain; its full sequence is Large ribosomal subunit protein bL31B (108 aa).

The tract at residues 85 to 108 (PKPETSVEEVLPKGKKKAPAKKKK) is disordered. Residues 97–108 (KGKKKAPAKKKK) are compositionally biased toward basic residues.

Belongs to the bacterial ribosomal protein bL31 family. Type B subfamily. As to quaternary structure, part of the 50S ribosomal subunit.

This is Large ribosomal subunit protein bL31B from Chlamydia muridarum (strain MoPn / Nigg).